Reading from the N-terminus, the 492-residue chain is N-succinylglutamate 5-semialdehyde dehydrogenase (492 aa).

NAD(+) is bound at residue 220 to 225 (GSASTG). Active-site residues include Glu243 and Cys277.

The protein belongs to the aldehyde dehydrogenase family. AstD subfamily.

It catalyses the reaction N-succinyl-L-glutamate 5-semialdehyde + NAD(+) + H2O = N-succinyl-L-glutamate + NADH + 2 H(+). It functions in the pathway amino-acid degradation; L-arginine degradation via AST pathway; L-glutamate and succinate from L-arginine: step 4/5. Catalyzes the NAD-dependent reduction of succinylglutamate semialdehyde into succinylglutamate. This chain is N-succinylglutamate 5-semialdehyde dehydrogenase, found in Salmonella enteritidis PT4 (strain P125109).